A 276-amino-acid chain; its full sequence is F420-dependent methylenetetrahydromethanopterin dehydrogenase (276 aa).

The protein belongs to the MTD family.

The catalysed reaction is 5,10-methylenetetrahydromethanopterin + oxidized coenzyme F420-(gamma-L-Glu)(n) + 2 H(+) = 5,10-methenyl-5,6,7,8-tetrahydromethanopterin + reduced coenzyme F420-(gamma-L-Glu)(n). Its function is as follows. Catalyzes the oxidation of methylene-H(4)MPT to methenyl-H(4)MPT(+). The chain is F420-dependent methylenetetrahydromethanopterin dehydrogenase from Methanosphaera stadtmanae (strain ATCC 43021 / DSM 3091 / JCM 11832 / MCB-3).